The sequence spans 252 residues: 3-deoxy-manno-octulosonate cytidylyltransferase (252 aa).

The protein belongs to the KdsB family.

The protein resides in the cytoplasm. The enzyme catalyses 3-deoxy-alpha-D-manno-oct-2-ulosonate + CTP = CMP-3-deoxy-beta-D-manno-octulosonate + diphosphate. Its pathway is nucleotide-sugar biosynthesis; CMP-3-deoxy-D-manno-octulosonate biosynthesis; CMP-3-deoxy-D-manno-octulosonate from 3-deoxy-D-manno-octulosonate and CTP: step 1/1. It participates in bacterial outer membrane biogenesis; lipopolysaccharide biosynthesis. In terms of biological role, activates KDO (a required 8-carbon sugar) for incorporation into bacterial lipopolysaccharide in Gram-negative bacteria. The polypeptide is 3-deoxy-manno-octulosonate cytidylyltransferase (Vibrio campbellii (strain ATCC BAA-1116)).